The primary structure comprises 339 residues: Tetraacyldisaccharide 4'-kinase (339 aa).

53-60 (TCGGAGKT) serves as a coordination point for ATP.

This sequence belongs to the LpxK family.

The catalysed reaction is a lipid A disaccharide + ATP = a lipid IVA + ADP + H(+). The protein operates within glycolipid biosynthesis; lipid IV(A) biosynthesis; lipid IV(A) from (3R)-3-hydroxytetradecanoyl-[acyl-carrier-protein] and UDP-N-acetyl-alpha-D-glucosamine: step 6/6. Its function is as follows. Transfers the gamma-phosphate of ATP to the 4'-position of a tetraacyldisaccharide 1-phosphate intermediate (termed DS-1-P) to form tetraacyldisaccharide 1,4'-bis-phosphate (lipid IVA). The chain is Tetraacyldisaccharide 4'-kinase from Bartonella henselae (strain ATCC 49882 / DSM 28221 / CCUG 30454 / Houston 1) (Rochalimaea henselae).